The following is a 386-amino-acid chain: MATKNKKEIVNTETKNLANLIIKEISKESFDFGILQKMQQAFSTASKQKQREAFINILDTKLDKEQLHKLNQTIMKNANELMPDNDPNFVCRTSNNKVFQEILLLEAKRSGMQARFSDTGALQSLDIKDITPEILDHYRVLQEKFYLKRNSKDSVDSRIAQSINFLLYAPLFRESDIYKKLGLKSAEIEREIQDPNGKYVQQLIDAKIGSNIPFHMQKNNVNEGKEIERTAIIEKAITKFEQDKKFSFEGKKRDEITKYLSKSLEGASDYILTFKKNELVDVIYQGLDKGQTLWSKVANYIGIKSYSISKENLKSVAKIINDKIKSSHTPLKIEVQDKLKQISKELNRLNNPVLPSEAQKVQVKSNKKPPIAPKPEHLKKRDHGLC.

Positions 355–386 (PSEAQKVQVKSNKKPPIAPKPEHLKKRDHGLC) are disordered. Residues 377-386 (HLKKRDHGLC) are compositionally biased toward basic residues.

This is an uncharacterized protein from Rickettsia prowazekii (strain Madrid E).